A 527-amino-acid chain; its full sequence is Cytokinin dehydrogenase 3 (527 aa).

An N-terminal signal peptide occupies residues 1 to 22 (MEVAMVCTRVNLLILILSLCSP). One can recognise an FAD-binding PCMH-type domain in the interval 52–231 (LFHSPSAVLK…TRARILLQEA (180 aa)). 3 residues coordinate FAD: Ala87, Gly89, and Gly91. His92 bears the Pros-8alpha-FAD histidine mark. Residues Ser93, Gln97, Asp155, Thr160, Ser166, Ile170, and Ile221 each coordinate FAD. Residue Asn413 is glycosylated (N-linked (GlcNAc...) asparagine). Positions 471 and 509 each coordinate FAD.

The protein belongs to the oxygen-dependent FAD-linked oxidoreductase family. As to quaternary structure, monomer. The cofactor is FAD. As to expression, expressed in inflorescence meristems. Highly expressed in lamina joints, and mainly in the parenchyma cells and vascular bundles on the abaxial side of the lamina joint. Expressed in roots, stems, leaves and young panicles.

The protein localises to the endoplasmic reticulum. The catalysed reaction is N(6)-dimethylallyladenine + A + H2O = 3-methyl-2-butenal + adenine + AH2. In terms of biological role, catalyzes the oxidation of cytokinins, a family of N(6)-substituted adenine derivatives, where the substituent is an isopentenyl group. Cytokinins are plant hormones essential for plant growth, development, and stress responses. Exhibits specific activities toward trans-zeatin (tZ) and isopentenyladenine (iP). Plays a role in lamina joint inclination. Regulates cell proliferation and vascular bundle number on the abaxial side of lamina joint. This Oryza sativa subsp. japonica (Rice) protein is Cytokinin dehydrogenase 3.